Reading from the N-terminus, the 454-residue chain is Guanine deaminase (454 aa).

Zn(2+) contacts are provided by histidine 82 and histidine 84. Substrate contacts are provided by residues 84-87 (HAPQ), 213-214 (RF), 240-243 (HISE), and aspartate 330. Residues histidine 240 and aspartate 330 each coordinate Zn(2+). Position 453 is a phosphoserine (serine 453).

It belongs to the metallo-dependent hydrolases superfamily. ATZ/TRZ family. Homodimer. Zn(2+) is required as a cofactor.

The catalysed reaction is guanine + H2O + H(+) = xanthine + NH4(+). The protein operates within purine metabolism; guanine degradation; xanthine from guanine: step 1/1. In terms of biological role, catalyzes the hydrolytic deamination of guanine, producing xanthine and ammonia. The protein is Guanine deaminase of Mus musculus (Mouse).